The following is a 429-amino-acid chain: Serine hydroxymethyltransferase (429 aa).

Residues Leu-126 and 130 to 132 contribute to the (6S)-5,6,7,8-tetrahydrofolate site; that span reads GHL. Residue Lys-235 is modified to N6-(pyridoxal phosphate)lysine.

It belongs to the SHMT family. Homodimer. It depends on pyridoxal 5'-phosphate as a cofactor.

Its subcellular location is the cytoplasm. It catalyses the reaction (6R)-5,10-methylene-5,6,7,8-tetrahydrofolate + glycine + H2O = (6S)-5,6,7,8-tetrahydrofolate + L-serine. The protein operates within one-carbon metabolism; tetrahydrofolate interconversion. It participates in amino-acid biosynthesis; glycine biosynthesis; glycine from L-serine: step 1/1. Its function is as follows. Catalyzes the reversible interconversion of serine and glycine with tetrahydrofolate (THF) serving as the one-carbon carrier. This reaction serves as the major source of one-carbon groups required for the biosynthesis of purines, thymidylate, methionine, and other important biomolecules. Also exhibits THF-independent aldolase activity toward beta-hydroxyamino acids, producing glycine and aldehydes, via a retro-aldol mechanism. The sequence is that of Serine hydroxymethyltransferase from Zymomonas mobilis subsp. mobilis (strain ATCC 31821 / ZM4 / CP4).